The chain runs to 423 residues: UPF0229 protein PSPPH_0628 (423 aa).

Positions 65-110 (HHGRGGKQTVVHPGNKEFTTGEHIARPQGGGGGKGPGKAGNSGEGM) are disordered. Over residues 92 to 107 (QGGGGGKGPGKAGNSG) the composition is skewed to gly residues.

It belongs to the UPF0229 family.

This is UPF0229 protein PSPPH_0628 from Pseudomonas savastanoi pv. phaseolicola (strain 1448A / Race 6) (Pseudomonas syringae pv. phaseolicola (strain 1448A / Race 6)).